Reading from the N-terminus, the 494-residue chain is Bifunctional pantoate ligase/cytidylate kinase (494 aa).

The pantoate--beta-alanine ligase stretch occupies residues methionine 1 to alanine 258. Methionine 7–histidine 14 lines the ATP pocket. Histidine 14 acts as the Proton donor in catalysis. Glutamine 41 lines the (R)-pantoate pocket. Residue glutamine 41 coordinates beta-alanine. Glycine 130 to aspartate 133 lines the ATP pocket. Glutamine 136 contacts (R)-pantoate. ATP-binding positions include valine 159 and serine 167–arginine 170. The cytidylate kinase stretch occupies residues phenylalanine 259 to valine 494.

It in the N-terminal section; belongs to the pantothenate synthetase family. This sequence in the C-terminal section; belongs to the cytidylate kinase family. Type 1 subfamily.

Its subcellular location is the cytoplasm. The catalysed reaction is (R)-pantoate + beta-alanine + ATP = (R)-pantothenate + AMP + diphosphate + H(+). It catalyses the reaction CMP + ATP = CDP + ADP. The enzyme catalyses dCMP + ATP = dCDP + ADP. Its pathway is cofactor biosynthesis; (R)-pantothenate biosynthesis; (R)-pantothenate from (R)-pantoate and beta-alanine: step 1/1. In terms of biological role, catalyzes the condensation of pantoate with beta-alanine in an ATP-dependent reaction via a pantoyl-adenylate intermediate. Catalyzes the transfer of a phosphate group from ATP to either CMP or dCMP to form CDP or dCDP and ADP, respectively. This is Bifunctional pantoate ligase/cytidylate kinase from Synechococcus sp. (strain CC9311).